We begin with the raw amino-acid sequence, 158 residues long: Urease accessory protein UreE (158 aa).

The protein belongs to the UreE family.

Its subcellular location is the cytoplasm. Functionally, involved in urease metallocenter assembly. Binds nickel. Probably functions as a nickel donor during metallocenter assembly. The polypeptide is Urease accessory protein UreE (Klebsiella pneumoniae (strain 342)).